The sequence spans 116 residues: Nitrogenase-stabilizing/protective protein NifW (116 aa).

It belongs to the NifW family. Homotrimer; associates with NifD.

Functionally, may protect the nitrogenase Fe-Mo protein from oxidative damage. The sequence is that of Nitrogenase-stabilizing/protective protein NifW from Rhodopseudomonas palustris (strain ATCC BAA-98 / CGA009).